Reading from the N-terminus, the 275-residue chain is MTEVISKTSLFLGACGNHHRVDDFSFSPVSFGGFGLKKSFSCLKLKSQKPLRSVFYGKQIVFGDSQDESFRRSSAITAQTTLRIGTAQKWWEKGLKDNMREISSAQELVDSLTNAGDKLVVVDFFSPGCGGCKALHPKICQFAEMNPDVQFLQVNYEEHKSMCYSLGVHVLPFFRFYRGSQGRVCSFSCTNATIKKFRDALAKHGPDRCSLGPTKGLEEKELVALAANKELNFTYTPKPVPVEKEAATPDSNPSLPVPLPSMSSNDEKTLVSAGR.

A chloroplast-targeting transit peptide spans 1 to 72; the sequence is MTEVISKTSL…GDSQDESFRR (72 aa). One can recognise a Thioredoxin domain in the interval 73 to 206; sequence SSAITAQTTL…FRDALAKHGP (134 aa). Residues C129 and C132 each act as nucleophile in the active site. A disulfide bridge links C129 with C132. The segment at 238 to 275 is disordered; sequence KPVPVEKEAATPDSNPSLPVPLPSMSSNDEKTLVSAGR. Low complexity predominate over residues 249 to 264; sequence PDSNPSLPVPLPSMSS.

This sequence belongs to the thioredoxin family.

It is found in the plastid. The protein resides in the chloroplast. Thiol-disulfide oxidoreductase that may participate in various redox reactions. Possesses insulin disulfide bonds reducing activity. The polypeptide is Thioredoxin-like 1-1, chloroplastic (Arabidopsis thaliana (Mouse-ear cress)).